Consider the following 333-residue polypeptide: MQKMSEKPLYRAAENPTRNADRRAGRFEEEELISKTGRHPDMVIQFQDDADDQHTSHYEGNWRHYFHKKLHIKNRLIRDWLSESLAMFLFMSLLLGGAATAHFTGKQDDPMLTAVFHGFSAVFGIYVGAGVSGGIINPALTFAVALLGRVSWRKCLVLVSAQYFGSFIASAVVYLIYYESLQNYAKTADDNGEFLQKTAGIWSTFPKPYLSMTGAIFNQIFCTMLLSIGFLSISDHKNFRPTKGLFPFAVGLLIMTVFLAFSYSAGAAMNPARDLSPRLWSLIIGYGNEVFSHNDYKWFWIPWLFPYVGALFGAVMYQIFVGVHWPDKQSTKR.

A disordered region spans residues 1–26; sequence MQKMSEKPLYRAAENPTRNADRRAGR. 2 helical membrane passes run 85–105 and 116–136; these read LAMF…HFTG and FHGF…GGII. The NPA 1 motif lies at 137-139; it reads NPA. A run of 3 helical transmembrane segments spans residues 156–176, 213–233, and 245–265; these read LVLV…VYLI, TGAI…FLSI, and LFPF…SYSA. An NPA 2 motif is present at residues 270–272; the sequence is NPA. The chain crosses the membrane as a helical span at residues 303–323; sequence WLFPYVGALFGAVMYQIFVGV.

This sequence belongs to the MIP/aquaporin (TC 1.A.8) family.

Its subcellular location is the cell membrane. In terms of biological role, aquaglyceroporin that may modulate the water content and osmolytes during anhydrobiosis. The polypeptide is Aquaporin-1 (Milnesium tardigradum (Water bear)).